Here is a 258-residue protein sequence, read N- to C-terminus: UDP-N-acetylenolpyruvoylglucosamine reductase (258 aa).

Arg142 is a catalytic residue. Ser184 functions as the Proton donor in the catalytic mechanism. Glu254 is a catalytic residue.

Belongs to the MurB family. FAD serves as cofactor.

Its subcellular location is the cytoplasm. It catalyses the reaction UDP-N-acetyl-alpha-D-muramate + NADP(+) = UDP-N-acetyl-3-O-(1-carboxyvinyl)-alpha-D-glucosamine + NADPH + H(+). It functions in the pathway cell wall biogenesis; peptidoglycan biosynthesis. Cell wall formation. The chain is UDP-N-acetylenolpyruvoylglucosamine reductase from Campylobacter jejuni (strain RM1221).